The chain runs to 1368 residues: DNA-directed RNA polymerase subunit beta (1368 aa).

It belongs to the RNA polymerase beta chain family. The RNAP catalytic core consists of 2 alpha, 1 beta, 1 beta' and 1 omega subunit. When a sigma factor is associated with the core the holoenzyme is formed, which can initiate transcription.

It catalyses the reaction RNA(n) + a ribonucleoside 5'-triphosphate = RNA(n+1) + diphosphate. In terms of biological role, DNA-dependent RNA polymerase catalyzes the transcription of DNA into RNA using the four ribonucleoside triphosphates as substrates. This Herminiimonas arsenicoxydans protein is DNA-directed RNA polymerase subunit beta.